Consider the following 397-residue polypeptide: 1-deoxy-D-xylulose 5-phosphate reductoisomerase (397 aa).

Positions 12, 13, 14, 15, 38, 39, 40, and 126 each coordinate NADPH. K127 is a binding site for 1-deoxy-D-xylulose 5-phosphate. E128 provides a ligand contact to NADPH. D152 contacts Mn(2+). Residues S153, E154, S188, and H211 each coordinate 1-deoxy-D-xylulose 5-phosphate. E154 contributes to the Mn(2+) binding site. G217 lines the NADPH pocket. 1-deoxy-D-xylulose 5-phosphate is bound by residues S224, N229, K230, and E233. E233 provides a ligand contact to Mn(2+).

It belongs to the DXR family. The cofactor is Mg(2+). Mn(2+) serves as cofactor.

The enzyme catalyses 2-C-methyl-D-erythritol 4-phosphate + NADP(+) = 1-deoxy-D-xylulose 5-phosphate + NADPH + H(+). It functions in the pathway isoprenoid biosynthesis; isopentenyl diphosphate biosynthesis via DXP pathway; isopentenyl diphosphate from 1-deoxy-D-xylulose 5-phosphate: step 1/6. Functionally, catalyzes the NADPH-dependent rearrangement and reduction of 1-deoxy-D-xylulose-5-phosphate (DXP) to 2-C-methyl-D-erythritol 4-phosphate (MEP). This Haemophilus influenzae (strain 86-028NP) protein is 1-deoxy-D-xylulose 5-phosphate reductoisomerase.